The following is a 717-amino-acid chain: Glycine--tRNA ligase beta subunit (717 aa).

Belongs to the class-II aminoacyl-tRNA synthetase family. In terms of assembly, tetramer of two alpha and two beta subunits.

The protein resides in the cytoplasm. The enzyme catalyses tRNA(Gly) + glycine + ATP = glycyl-tRNA(Gly) + AMP + diphosphate. This chain is Glycine--tRNA ligase beta subunit, found in Gloeothece citriformis (strain PCC 7424) (Cyanothece sp. (strain PCC 7424)).